A 136-amino-acid polypeptide reads, in one-letter code: Type II nicking enzyme V.XorIIP (136 aa).

This sequence belongs to the Vsr family.

May nick XorII sequences that contain T/G mispairs resulting from m5C-deamination. If unrepaired, these mismatches can lead to C-to-T transition mutations. The very short patch (VSP) repair process counteracts the mutagenic process by repairing the mismatches in favor of the G-containing strand. This enzyme is an endonuclease that nicks double-stranded DNA within the sequence CGATCG (C-methylation site unknown) next to the thymidine residue that is mismatched to 2'-deoxyguanosine. The incision is mismatch-dependent and strand-specific. The sequence is that of Type II nicking enzyme V.XorIIP from Xanthomonas oryzae pv. oryzae (strain KACC10331 / KXO85).